The following is a 179-amino-acid chain: MTLVVGLGNIGEQYAQTRHNVGFMLIDLLLKDLEVAKLSNTKFKGELFKSSLAFFLKPSTYMNLSGESVKAVSDFYKCDRIIVIHDDIDLNLGTLKFKIGGSSGGHNGLKSIDNLCGNAYERVRIGVGKDQDVISHVLGKFKQEEQESLNKVLEQAKKALFELLKSNIEQVASKYSIRN.

Tyr-14 lines the tRNA pocket. His-19 serves as the catalytic Proton acceptor. TRNA contacts are provided by Tyr-61, Asn-63, and Asn-107.

Belongs to the PTH family. In terms of assembly, monomer.

It is found in the cytoplasm. It carries out the reaction an N-acyl-L-alpha-aminoacyl-tRNA + H2O = an N-acyl-L-amino acid + a tRNA + H(+). Its function is as follows. Hydrolyzes ribosome-free peptidyl-tRNAs (with 1 or more amino acids incorporated), which drop off the ribosome during protein synthesis, or as a result of ribosome stalling. Functionally, catalyzes the release of premature peptidyl moieties from peptidyl-tRNA molecules trapped in stalled 50S ribosomal subunits, and thus maintains levels of free tRNAs and 50S ribosomes. In Campylobacter lari (strain RM2100 / D67 / ATCC BAA-1060), this protein is Peptidyl-tRNA hydrolase.